The chain runs to 446 residues: Questin oxidase (446 aa).

Belongs to the questin oxidase family.

It carries out the reaction questin + NADPH + O2 = demethylsulochrin + NADP(+). The protein operates within secondary metabolite biosynthesis. Its function is as follows. Questin oxidase; part of the gene cluster that mediates the biosynthesis of geodin, an intermediate in the biosynthesis of other natural products. The pathway begins with the synthesis of atrochrysone thioester by the polyketide synthase (PKS) gedC. The atrochrysone carboxyl ACP thioesterase gedB then breaks the thioester bond and releases the atrochrysone carboxylic acid from gedC. The atrochrysone carboxylic acid is then converted to atrochrysone which is further transformed into emodinanthrone. The next step is performed by the emodinanthrone oxygenase gedH that catalyzes the oxidation of emodinanthrone to emodin. Emodin O-methyltransferase encoded probably by gedA then catalyzes methylation of the 8-hydroxy group of emodin to form questin. Ring cleavage of questin by questin oxidase gedK leads to desmethylsulochrin via several intermediates including questin epoxide. Another methylation step probably catalyzed by methyltransferase gedG leads to the formation of sulochrin which is further converted to dihydrogeodin by the sulochrin halogenase gedL. Finally, the dihydrogeodin oxidase gedJ catalyzes the stereospecific phenol oxidative coupling reaction converting dihydrogeodin to geodin. This Aspergillus terreus (strain NIH 2624 / FGSC A1156) protein is Questin oxidase.